Here is a 281-residue protein sequence, read N- to C-terminus: sn-glycerol-3-phosphate transport system permease protein UgpE (281 aa).

6 consecutive transmembrane segments (helical) span residues 16–36, 85–105, 113–133, 142–162, 202–222, and 247–267; these read LILGIAVILFPLYVAFVAATL, FSITLGKITVSMLSAFAIVWF, FFWMIFITLMLPVEVRIFPTV, LDSYAGLTLPLMASATATFLF, ALFVITFIYGWNQYLWPLLII, and WNSVMAAMLLTLIPPVVIVLV. An ABC transmembrane type-1 domain is found at 77–268; sequence LLNSFVMAFS…IPPVVIVLVM (192 aa).

This sequence belongs to the binding-protein-dependent transport system permease family. UgpAE subfamily. In terms of assembly, the complex is composed of two ATP-binding proteins (UgpC), two transmembrane proteins (UgpA and UgpE) and a solute-binding protein (UgpB).

It localises to the cell inner membrane. In terms of biological role, part of the ABC transporter complex UgpBAEC involved in sn-glycerol-3-phosphate (G3P) import. Probably responsible for the translocation of the substrate across the membrane. This chain is sn-glycerol-3-phosphate transport system permease protein UgpE (ugpE), found in Escherichia coli O157:H7.